We begin with the raw amino-acid sequence, 154 residues long: uncharacterized protein (154 aa).

This is an uncharacterized protein from Aquifex aeolicus (strain VF5).